A 229-amino-acid chain; its full sequence is 1-(5-phosphoribosyl)-5-[(5-phosphoribosylamino)methylideneamino] imidazole-4-carboxamide isomerase (229 aa).

The active-site Proton acceptor is the aspartate 8. Aspartate 125 (proton donor) is an active-site residue.

Belongs to the HisA/HisF family.

The protein resides in the cytoplasm. The catalysed reaction is 1-(5-phospho-beta-D-ribosyl)-5-[(5-phospho-beta-D-ribosylamino)methylideneamino]imidazole-4-carboxamide = 5-[(5-phospho-1-deoxy-D-ribulos-1-ylimino)methylamino]-1-(5-phospho-beta-D-ribosyl)imidazole-4-carboxamide. The protein operates within amino-acid biosynthesis; L-histidine biosynthesis; L-histidine from 5-phospho-alpha-D-ribose 1-diphosphate: step 4/9. The sequence is that of 1-(5-phosphoribosyl)-5-[(5-phosphoribosylamino)methylideneamino] imidazole-4-carboxamide isomerase from Thermococcus onnurineus (strain NA1).